We begin with the raw amino-acid sequence, 194 residues long: MSPRSKSQLRTALLQNRRSVPEAVREGEAEALRGWLSGLKISGRTVCAYVPVGSEPGSIALLDTLLELGARVLLPVARNDAAGIPLPLQWGKYRPGTLVAAEFGLREPPPPWLPAETIGEADVILVPALAVDRSGARLGRGAGFYDRTLHHAAATAQVIAVVRDDELLDEIPAEPHDVAMTHVLTPKRGIVALR.

Residues K6–R10, G139–D146, and D177 contribute to the ATP site.

This sequence belongs to the 5-formyltetrahydrofolate cyclo-ligase family.

The enzyme catalyses (6S)-5-formyl-5,6,7,8-tetrahydrofolate + ATP = (6R)-5,10-methenyltetrahydrofolate + ADP + phosphate. It participates in one-carbon metabolism; tetrahydrofolate interconversion. Its function is as follows. Involved in the removal of 5-formyltetrahydrofolate. In vitro, it is a potent inhibitor of various folate-dependent enzymes in the C1 metabolism network and in vivo it might function as a folate storage. 5-formyltetrahydrofolate is also used as an antifolate rescue agent in cancer chemotherapy. Catalyzes the irreversible ATP-dependent transformation of 5-formyltetrahydrofolate (5-CHO-THF) to form 5,10-methenyltetrahydrofolate (5,10-CH=THF). The reverse reaction is catalyzed by the serine hydroxymethyltransferase GlyA (SHMT). The protein is 5-formyltetrahydrofolate cyclo-ligase of Mycolicibacterium smegmatis (strain ATCC 700084 / mc(2)155) (Mycobacterium smegmatis).